Here is a 278-residue protein sequence, read N- to C-terminus: Dermonecrotic toxin LlSicTox-alphaIII3iii (278 aa).

Residue His-5 is part of the active site. 2 residues coordinate Mg(2+): Glu-25 and Asp-27. Catalysis depends on His-40, which acts as the Nucleophile. Cysteines 44 and 50 form a disulfide. Asp-84 lines the Mg(2+) pocket.

The protein belongs to the arthropod phospholipase D family. Class I subfamily. Mg(2+) is required as a cofactor. As to expression, expressed by the venom gland.

It is found in the secreted. It catalyses the reaction an N-(acyl)-sphingosylphosphocholine = an N-(acyl)-sphingosyl-1,3-cyclic phosphate + choline. The enzyme catalyses an N-(acyl)-sphingosylphosphoethanolamine = an N-(acyl)-sphingosyl-1,3-cyclic phosphate + ethanolamine. It carries out the reaction a 1-acyl-sn-glycero-3-phosphocholine = a 1-acyl-sn-glycero-2,3-cyclic phosphate + choline. The catalysed reaction is a 1-acyl-sn-glycero-3-phosphoethanolamine = a 1-acyl-sn-glycero-2,3-cyclic phosphate + ethanolamine. In terms of biological role, dermonecrotic toxins cleave the phosphodiester linkage between the phosphate and headgroup of certain phospholipids (sphingolipid and lysolipid substrates), forming an alcohol (often choline) and a cyclic phosphate. This toxin acts on sphingomyelin (SM). It may also act on ceramide phosphoethanolamine (CPE), lysophosphatidylcholine (LPC) and lysophosphatidylethanolamine (LPE), but not on lysophosphatidylserine (LPS), and lysophosphatidylglycerol (LPG). It acts by transphosphatidylation, releasing exclusively cyclic phosphate products as second products. Induces dermonecrosis, hemolysis, increased vascular permeability, edema, inflammatory response, and platelet aggregation. The polypeptide is Dermonecrotic toxin LlSicTox-alphaIII3iii (Loxosceles laeta (South American recluse spider)).